The following is a 257-amino-acid chain: Phosphate import ATP-binding protein PstB (257 aa).

The ABC transporter domain maps to 5 to 246 (LEIKDLTAFY…EVIFTSPKNE (242 aa)). 37–44 (GPSGCGKS) is an ATP binding site.

This sequence belongs to the ABC transporter superfamily. Phosphate importer (TC 3.A.1.7) family. In terms of assembly, the complex is composed of two ATP-binding proteins (PstB), two transmembrane proteins (PstC and PstA) and a solute-binding protein (PstS).

It localises to the cell membrane. It catalyses the reaction phosphate(out) + ATP + H2O = ADP + 2 phosphate(in) + H(+). In terms of biological role, part of the ABC transporter complex PstSACB involved in phosphate import. Responsible for energy coupling to the transport system. The sequence is that of Phosphate import ATP-binding protein PstB from Tropheryma whipplei (strain TW08/27) (Whipple's bacillus).